The sequence spans 129 residues: Histone H2A-IV (129 aa).

Positions 1–22 (MSGRGKQGGKARAKAKSRSSRA) are disordered. Position 2 is an N-acetylserine (Ser2). Ser2 carries the post-translational modification Phosphoserine. Lys6 bears the N6-(2-hydroxyisobutyryl)lysine mark. N6-acetyllysine occurs at positions 6 and 10. The span at 7 to 19 (QGGKARAKAKSRS) shows a compositional bias: basic residues. An N6-(2-hydroxyisobutyryl)lysine; alternate modification is found at Lys10. Lys10 carries the N6-lactoyllysine; alternate modification. Lys10 is subject to N6-succinyllysine. Glycyl lysine isopeptide (Lys-Gly) (interchain with G-Cter in ubiquitin) cross-links involve residues Lys14 and Lys16. At Lys37 the chain carries N6-(2-hydroxyisobutyryl)lysine; alternate. Lys75 and Lys76 each carry N6-(2-hydroxyisobutyryl)lysine. An N6-(2-hydroxyisobutyryl)lysine; alternate modification is found at Lys96. Position 96 is an N6-succinyllysine (Lys96). Residue Lys96 is modified to N6-glutaryllysine; alternate. Lys100 carries the post-translational modification N6-glutaryllysine. Gln105 carries the post-translational modification N5-methylglutamine. Residue Lys119 is modified to N6-(2-hydroxyisobutyryl)lysine; alternate. Lys119 and Lys120 each carry N6-glutaryllysine; alternate. A Glycyl lysine isopeptide (Lys-Gly) (interchain with G-Cter in ubiquitin) cross-link involves residue Lys120.

It belongs to the histone H2A family. The nucleosome is a histone octamer containing two molecules each of H2A, H2B, H3 and H4 assembled in one H3-H4 heterotetramer and two H2A-H2B heterodimers. The octamer wraps approximately 147 bp of DNA. In terms of processing, monoubiquitination of Lys-120 (H2AK119Ub) gives a specific tag for epigenetic transcriptional repression. Following DNA double-strand breaks (DSBs), it is ubiquitinated through 'Lys-63' linkage of ubiquitin moieties, leading to the recruitment of repair proteins to sites of DNA damage. H2AK119Ub and ionizing radiation-induced 'Lys-63'-linked ubiquitination are distinct events. Post-translationally, phosphorylation on Ser-2 is enhanced during mitosis. Phosphorylation on Ser-2 directly represses transcription. Glutamine methylation at Gln-105 (H2AQ104me) by FBL is specifically dedicated to polymerase I. It is present at 35S ribosomal DNA locus and impairs binding of the FACT complex.

It localises to the nucleus. The protein resides in the chromosome. Core component of nucleosome. Nucleosomes wrap and compact DNA into chromatin, limiting DNA accessibility to the cellular machineries which require DNA as a template. Histones thereby play a central role in transcription regulation, DNA repair, DNA replication and chromosomal stability. DNA accessibility is regulated via a complex set of post-translational modifications of histones, also called histone code, and nucleosome remodeling. The protein is Histone H2A-IV of Gallus gallus (Chicken).